Here is a 444-residue protein sequence, read N- to C-terminus: UDP-N-acetylmuramate--L-alanine ligase (444 aa).

111–117 is an ATP binding site; it reads GAHGKTS.

Belongs to the MurCDEF family.

Its subcellular location is the cytoplasm. It catalyses the reaction UDP-N-acetyl-alpha-D-muramate + L-alanine + ATP = UDP-N-acetyl-alpha-D-muramoyl-L-alanine + ADP + phosphate + H(+). It functions in the pathway cell wall biogenesis; peptidoglycan biosynthesis. In terms of biological role, cell wall formation. This is UDP-N-acetylmuramate--L-alanine ligase from Leuconostoc citreum (strain KM20).